We begin with the raw amino-acid sequence, 395 residues long: Type III polyketide synthase A (395 aa).

63-70 (KLEHLCKT) provides a ligand contact to CoA. Residue Cys172 is the Nucleophile of the active site. Substrate is bound at residue 224-225 (GD). Residues Leu274, 314–317 (GGPA), and Ala317 each bind CoA.

This sequence belongs to the thiolase-like superfamily. Chalcone/stilbene synthases family. As to quaternary structure, homodimer. Interacts with 4CLL1/ACOS5 and TKPR1. As to expression, expressed in flowers and flower buds (at protein level), and, at very low levels, in roots, seedlings, leaves and stems. Mostly confined to anther tapetal cells.

It is found in the endoplasmic reticulum. It functions in the pathway secondary metabolite biosynthesis; flavonoid biosynthesis. Plant type III polyketide synthases (PKSs) that catalyzes the condensation of malonyl-CoA units with various CoA ester starter molecules to generate a diverse array of natural products including long-chain alkyl alpha-pyrones. Accepts up to C(20) chain-length fatty acyl CoAs as starter substrates, and carries out sequential condensations with malonyl-CoA to produce triketide and tetraketide alpha-pyrones, potential sporopollenin precursors. Favorite substrates for are midchain- and v-hydroxylated fatty acyl-CoAs (e.g. 12-hydroxyoctadecanoyl-CoA and 16-hydroxyhexadecanoyl-CoA). Required for pollen development and sporopollenin biosynthesis, the major constituent of exine in the outer pollen wall. In vitro, can use 4-coumaroyl-coenzyme A as substrate to produce bis-noryangonin and fatty acyl-coenzyme A as substrate to produce medium-chain alkyl pyrones. May play a role in both the synthesis of pollen fatty acids and phenolics found in exine. The protein is Type III polyketide synthase A of Arabidopsis thaliana (Mouse-ear cress).